The following is a 271-amino-acid chain: Ribosomal RNA small subunit methyltransferase A (271 aa).

His11, Leu13, Gly38, Glu58, Asp86, and Asn101 together coordinate S-adenosyl-L-methionine.

Belongs to the class I-like SAM-binding methyltransferase superfamily. rRNA adenine N(6)-methyltransferase family. RsmA subfamily.

It is found in the cytoplasm. The catalysed reaction is adenosine(1518)/adenosine(1519) in 16S rRNA + 4 S-adenosyl-L-methionine = N(6)-dimethyladenosine(1518)/N(6)-dimethyladenosine(1519) in 16S rRNA + 4 S-adenosyl-L-homocysteine + 4 H(+). Its function is as follows. Specifically dimethylates two adjacent adenosines (A1518 and A1519) in the loop of a conserved hairpin near the 3'-end of 16S rRNA in the 30S particle. May play a critical role in biogenesis of 30S subunits. This Helicobacter pylori (strain P12) protein is Ribosomal RNA small subunit methyltransferase A.